The sequence spans 154 residues: Transcriptional repressor NrdR (154 aa).

A zinc finger spans residues 3–34 (CPFCGAEDTAVADTRLNDEADVVRRRRKCNAC). The region spanning 49 to 139 (PQVVKKNGLR…VYRNFEDVDA (91 aa)) is the ATP-cone domain.

This sequence belongs to the NrdR family. Requires Zn(2+) as cofactor.

In terms of biological role, negatively regulates transcription of bacterial ribonucleotide reductase nrd genes and operons by binding to NrdR-boxes. In Dechloromonas aromatica (strain RCB), this protein is Transcriptional repressor NrdR.